Reading from the N-terminus, the 109-residue chain is Nucleoid-associated protein BUsg_467 (109 aa).

The protein belongs to the YbaB/EbfC family. In terms of assembly, homodimer.

The protein resides in the cytoplasm. Its subcellular location is the nucleoid. Functionally, binds to DNA and alters its conformation. May be involved in regulation of gene expression, nucleoid organization and DNA protection. This Buchnera aphidicola subsp. Schizaphis graminum (strain Sg) protein is Nucleoid-associated protein BUsg_467.